The sequence spans 277 residues: Zinc transporter ZupT (277 aa).

A run of 8 helical transmembrane segments spans residues 7 to 27, 38 to 58, 73 to 93, 133 to 155, 165 to 187, 196 to 216, 220 to 240, and 257 to 277; these read VLLAFGLTLFAGLATGVGSAI, FLAVALGFSAGVMIYVSFVEI, VLASWYTVAAFFSGALLIAVI, AGVLAAVAIGIHNFPEGLAAFSA, AIAVAIAIHNIPEGMAVSVPIYY, FLYSFLSGVSEPIGALVGYVV, FFTPMVFGLLFASVAGIMVYI, and LCILGVFSGMGVMALSLLLFL. The Fe(2+) site is built by Asn145 and Glu148. 2 residues coordinate Zn(2+): Glu148 and His173. Residues Asn174, Glu177, and Glu206 each coordinate Fe(2+). Zn(2+) is bound at residue Glu177.

It belongs to the ZIP transporter (TC 2.A.5) family. ZupT subfamily.

It localises to the cell inner membrane. It carries out the reaction Zn(2+)(in) = Zn(2+)(out). Its function is as follows. Mediates zinc uptake. May also transport other divalent cations. In Nitratidesulfovibrio vulgaris (strain ATCC 29579 / DSM 644 / CCUG 34227 / NCIMB 8303 / VKM B-1760 / Hildenborough) (Desulfovibrio vulgaris), this protein is Zinc transporter ZupT.